The primary structure comprises 637 residues: Serine protease Hayan (637 aa).

A signal peptide spans 1–26 (MAMISARRYFLLGLLVLTTSAYVTVG). A Clip domain is found at 31–79 (PCQVRSDIPGICLSSSACENIRGYLKSGTLSTSQVPSCGFGAREEIICC). Cystine bridges form between Cys32–Cys78, Cys42–Cys68, and Cys48–Cys79. Disordered stretches follow at residues 95–137 (FHAT…LDEN), 152–178 (KPQKTHESLKLPTQESMKTPTHESMKM), 216–260 (QRSF…NNNN), and 286–365 (LQTT…EKER). Over residues 125–136 (EGKRERESRLDE) the composition is skewed to basic and acidic residues. Over residues 234-244 (PLTTPRSRPQR) the composition is skewed to polar residues. Positions 245 to 260 (PNNSNFNTNPSPNNNN) are enriched in low complexity. Over residues 306-320 (EPYRFRGQDRDKDTQ) the composition is skewed to basic and acidic residues. Over residues 321 to 332 (PQEPWNDVSNNL) the composition is skewed to polar residues. Disulfide bonds link Cys371–Cys497, Cys414–Cys430, Cys543–Cys567, and Cys578–Cys609. In terms of domain architecture, Peptidase S1 spans 385-632 (ILDGERVDRG…FLDYIEGIVW (248 aa)). Catalysis depends on charge relay system residues His429 and Asp477. Ser582 functions as the Charge relay system in the catalytic mechanism.

The protein belongs to the peptidase S1 family. CLIP subfamily.

Its subcellular location is the secreted. Serine protease which, by converting prophenoloxidase 1 (PPO1) into its active form, plays an essential role in the melanization immune response to physical or septic wounding. May function in diverse PPO1-activating cascades that are negatively controlled by different serpin proteins; Spn27A and Spn28D in the hemolymph, and Spn28D and Spn77BA in the trachea. Also required in the systematic wound response by mediating the redox-dependent activation of the JNK cytoprotective cascade in neuronal tissues after integument wounding. This is Serine protease Hayan from Drosophila melanogaster (Fruit fly).